The following is a 936-amino-acid chain: F-box protein dre-1 (936 aa).

The disordered stretch occupies residues M1–L67. Low complexity predominate over residues Q22–Q36. The span at G48–D63 shows a compositional bias: polar residues. Residues Q159 to L205 form the F-box domain. PbH1 repeat units follow at residues S405 to D427, N428 to N450, H451 to E473, H474 to N496, S497 to E519, R520 to S542, H543 to G565, E566 to S588, Q589 to E611, K612 to T634, G635 to D657, Q658 to T680, G681 to N703, G704 to T726, D727 to N749, R750 to T772, E773 to N795, and G796 to T818. The UBR-type zinc-finger motif lies at G843 to V914.

Component of a SCF ubiquitin ligase complex. Interacts (via F-box) with skr-1. Interacts with blmp-1; the interaction targets blmp-1 for proteasomal degradation. Interacts with ced-9; the interaction inhibits ced-9 activity, either directly or indirectly. In terms of tissue distribution, in mid-embryogenesis, expression is most prominent in epidermal and intestinal cells. By the 1.5-fold stage of embryogenesis, expression is additionally detected in neurons and other cells. During larval and adult stages, highest expression is seen in epidermal seam cells and hypodermis. In larvae, strongly expressed in the P epidermal blast cells and descendents that give rise to the vulva and weakly expressed in the somatic gonad, including the gonadoblasts, the anchor cell and the distal tip cells. Some weak expression also seen in adult spermatheca and uterus. In the musculature, expressed in the pharynx, anal depressor, sex muscles, and body wall muscles. Detected in neurons of the head, tail, ventral cord and periphery. Also expressed in the embryonic tail spike cell.

It localises to the nucleus. The protein resides in the cytoplasm. The protein operates within protein modification; protein ubiquitination. Substrate recognition component of a SCF (SKP1-CUL1-F-box protein) E3 ubiquitin-protein ligase complex which mediates the ubiquitination and subsequent proteasomal degradation of target proteins including blmp-1. Promotes ubiquitination of snail family proteins ces-1, scrt-1 and snai-1. Heterochronic protein which is required for the timing of gonad development and epidermal seam cell differentiation. Regulates tail-spike cell death through inhibition of the apoptosis regulator ced-9. The chain is F-box protein dre-1 from Caenorhabditis elegans.